We begin with the raw amino-acid sequence, 892 residues long: Bifunctional uridylyltransferase/uridylyl-removing enzyme (892 aa).

Residues 1–348 (MPNFTGNTRP…LVDAKVHVRP (348 aa)) are uridylyltransferase. The tract at residues 349-710 (INERFQARNG…RIHNQEPGTM (362 aa)) is uridylyl-removing. One can recognise an HD domain in the interval 467 to 589 (VDEHTLFLIH…VGDERRLNHL (123 aa)). 2 consecutive ACT domains span residues 711–786 (EVFI…LTQP) and 822–892 (VMEL…YLER).

The protein belongs to the GlnD family. It depends on Mg(2+) as a cofactor.

It carries out the reaction [protein-PII]-L-tyrosine + UTP = [protein-PII]-uridylyl-L-tyrosine + diphosphate. The enzyme catalyses [protein-PII]-uridylyl-L-tyrosine + H2O = [protein-PII]-L-tyrosine + UMP + H(+). With respect to regulation, uridylyltransferase (UTase) activity is inhibited by glutamine, while glutamine activates uridylyl-removing (UR) activity. In terms of biological role, modifies, by uridylylation and deuridylylation, the PII regulatory proteins (GlnB and homologs), in response to the nitrogen status of the cell that GlnD senses through the glutamine level. Under low glutamine levels, catalyzes the conversion of the PII proteins and UTP to PII-UMP and PPi, while under higher glutamine levels, GlnD hydrolyzes PII-UMP to PII and UMP (deuridylylation). Thus, controls uridylylation state and activity of the PII proteins, and plays an important role in the regulation of nitrogen assimilation and metabolism. This Nitrosococcus oceani (strain ATCC 19707 / BCRC 17464 / JCM 30415 / NCIMB 11848 / C-107) protein is Bifunctional uridylyltransferase/uridylyl-removing enzyme.